A 499-amino-acid polypeptide reads, in one-letter code: Putative antiporter subunit mnhD2 (499 aa).

14 consecutive transmembrane segments (helical) span residues 3 to 23 (SNLL…LVFT), 32 to 52 (ILYI…LIYV), 78 to 98 (LSLV…SYGF), 108 to 128 (YYLP…FLTS), 130 to 150 (LFNL…LVTL), 161 to 181 (IIYV…IGLL), 206 to 226 (IIII…LVLF), 240 to 260 (LAAL…IRFF), 273 to 293 (PLLV…VIAY), 308 to 328 (IGFV…GAIF), 330 to 350 (LAND…LVYM), 368 to 388 (FFGV…PFSG), 403 to 423 (GNFI…YSLF), and 450 to 470 (TILG…PVVM).

It belongs to the CPA3 antiporters (TC 2.A.63) subunit D family. May form a heterooligomeric complex that consists of seven subunits: mnhA2, mnhB2, mnhC2, mnhD2, mnhE2, mnhF2 and mnhG2.

Its subcellular location is the cell membrane. This Staphylococcus haemolyticus (strain JCSC1435) protein is Putative antiporter subunit mnhD2 (mnhD2).